A 98-amino-acid chain; its full sequence is Integration host factor subunit beta (98 aa).

The segment at 59–98 is disordered; the sequence is RTGRNPKTGESVTLPGKYVPHFKPGKEMRDRVNESIQSEG. Basic and acidic residues predominate over residues 82 to 91; that stretch reads PGKEMRDRVN.

The protein belongs to the bacterial histone-like protein family. As to quaternary structure, heterodimer of an alpha and a beta chain.

This protein is one of the two subunits of integration host factor, a specific DNA-binding protein that functions in genetic recombination as well as in transcriptional and translational control. The protein is Integration host factor subunit beta of Saccharophagus degradans (strain 2-40 / ATCC 43961 / DSM 17024).